The sequence spans 701 residues: F-box/LRR-repeat protein 17 (701 aa).

Residues 1–11 (MGHLLSKEPRN) show a composition bias toward basic and acidic residues. Disordered regions lie at residues 1–20 (MGHLLSKEPRNRPSQKRPRC), 72–94 (APAGPEEEPPLSPPPRDGAYAAA), and 227–300 (GGGG…DADC). The span at 227–237 (GGGGGPAGGGA) shows a compositional bias: gly residues. Residues 252-264 (EQPPQPLCPPPSS) show a composition bias toward pro residues. In terms of domain architecture, F-box spans 318–365 (TPDINQLPPSILLKIFSNLSLDERCLSASLVCKYWRDLCLDFQFWKQL).

This sequence belongs to the FBXL17 family. In terms of assembly, part of the SCF (SKP1-CUL1-F-box) E3 ubiquitin-protein ligase complex SCF(FBXL17) composed of CUL1, SKP1, RBX1 and FBXL17. Interacts with BTB domain-containing proteins such as KLHL12, BCL6 and BACH1; specifically recognizes and binds a conserved degron of non-consecutive residues present at the interface of BTB dimers of aberrant composition. Interacts with SUFU. Interacts with PRMT1.

Its subcellular location is the cytoplasm. It is found in the nucleus. Functionally, substrate-recognition component of the SCF(FBXL17) E3 ubiquitin ligase complex, a key component of a quality control pathway required to ensure functional dimerization of BTB domain-containing proteins (dimerization quality control, DQC). FBXL17 specifically recognizes and binds a conserved degron of non-consecutive residues present at the interface of BTB dimers of aberrant composition: aberrant BTB dimer are then ubiquitinated by the SCF(FBXL17) complex and degraded by the proteasome. The ability of the SCF(FBXL17) complex to eliminate compromised BTB dimers is required for the differentiation and survival of neural crest and neuronal cells. The SCF(FBXL17) complex mediates ubiquitination and degradation of BACH1. The SCF(FBXL17) complex is also involved in the regulation of the hedgehog/smoothened (Hh) signaling pathway by mediating the ubiquitination and degradation of SUFU, allowing the release of GLI1 from SUFU for proper Hh signal transduction. The SCF(FBXL17) complex mediates ubiquitination and degradation of PRMT1. In Homo sapiens (Human), this protein is F-box/LRR-repeat protein 17.